Consider the following 815-residue polypeptide: Lon protease 1 (815 aa).

The 194-residue stretch at 12 to 205 (VFVLALRDVV…HILKTIETEI (194 aa)) folds into the Lon N-terminal domain. 358–365 (GPPGVGKT) contributes to the ATP binding site. Residues 594–775 (TNQIGQVAGL…DEVFKIALES (182 aa)) enclose the Lon proteolytic domain. Residues serine 681 and lysine 724 contribute to the active site.

Belongs to the peptidase S16 family. In terms of assembly, homohexamer. Organized in a ring with a central cavity.

The protein localises to the cytoplasm. It catalyses the reaction Hydrolysis of proteins in presence of ATP.. Functionally, ATP-dependent serine protease that mediates the selective degradation of mutant and abnormal proteins as well as certain short-lived regulatory proteins. Required for cellular homeostasis and for survival from DNA damage and developmental changes induced by stress. Degrades polypeptides processively to yield small peptide fragments that are 5 to 10 amino acids long. Binds to DNA in a double-stranded, site-specific manner. The protein is Lon protease 1 of Hydrogenovibrio crunogenus (strain DSM 25203 / XCL-2) (Thiomicrospira crunogena).